Here is a 105-residue protein sequence, read N- to C-terminus: UPF0235 protein RP839 (105 aa).

It belongs to the UPF0235 family.

This Rickettsia prowazekii (strain Madrid E) protein is UPF0235 protein RP839.